The chain runs to 130 residues: S-protein homolog 30 (130 aa).

Residues Asn64 and Asn77 are each glycosylated (N-linked (GlcNAc...) asparagine).

It belongs to the plant self-incompatibility (S1) protein family.

The protein resides in the secreted. The sequence is that of S-protein homolog 30 from Arabidopsis thaliana (Mouse-ear cress).